The following is a 500-amino-acid chain: Gamma-glutamylanilide synthase (500 aa).

The region spanning 32–136 (LGLEMIRLSW…MLADLHWKSG (105 aa)) is the GS beta-grasp domain. The region spanning 143-500 (PRGIMKKAVK…WEQKEYFNLL (358 aa)) is the GS catalytic domain.

It belongs to the glutamine synthetase family. In terms of assembly, homohexamer.

The enzyme catalyses aniline + L-glutamate + ATP = N(5)-phenyl-L-glutamine + ADP + phosphate. In terms of biological role, involved in the initial oxidation of aniline to catechol by the release of its amino group. Catalyzes the ATP-dependent ligation of L-glutamate to aniline to yield gamma-glutamylanilide (gamma-GA). AtdA1 has a broad substrate range and is able to convert the following anilines, including chlorinated and methylated forms of aniline: aniline (100%), o-chloroaniline (92%), m-chloroaniline (69%), p-chloroaniline (92%), o-methylaniline (40%), m-methylaniline (27%) and p-methylaniline (45%). The sequence is that of Gamma-glutamylanilide synthase from Acinetobacter sp.